A 156-amino-acid chain; its full sequence is 6,7-dimethyl-8-ribityllumazine synthase (156 aa).

Residues F25, 59–61 (AFE), and 83–85 (AVI) each bind 5-amino-6-(D-ribitylamino)uracil. 88-89 (GT) contacts (2S)-2-hydroxy-3-oxobutyl phosphate. Catalysis depends on H91, which acts as the Proton donor. Residue F116 coordinates 5-amino-6-(D-ribitylamino)uracil. Residue R130 participates in (2S)-2-hydroxy-3-oxobutyl phosphate binding.

The protein belongs to the DMRL synthase family.

It catalyses the reaction (2S)-2-hydroxy-3-oxobutyl phosphate + 5-amino-6-(D-ribitylamino)uracil = 6,7-dimethyl-8-(1-D-ribityl)lumazine + phosphate + 2 H2O + H(+). It participates in cofactor biosynthesis; riboflavin biosynthesis; riboflavin from 2-hydroxy-3-oxobutyl phosphate and 5-amino-6-(D-ribitylamino)uracil: step 1/2. Its function is as follows. Catalyzes the formation of 6,7-dimethyl-8-ribityllumazine by condensation of 5-amino-6-(D-ribitylamino)uracil with 3,4-dihydroxy-2-butanone 4-phosphate. This is the penultimate step in the biosynthesis of riboflavin. In Desulfovibrio desulfuricans (strain ATCC 27774 / DSM 6949 / MB), this protein is 6,7-dimethyl-8-ribityllumazine synthase.